A 203-amino-acid chain; its full sequence is Ribonuclease HII (203 aa).

One can recognise an RNase H type-2 domain in the interval 14 to 203 (GVIAGVDEVG…ILNSTKRALL (190 aa)). A divalent metal cation is bound by residues D20, E21, and D112.

It belongs to the RNase HII family. Requires Mn(2+) as cofactor. Mg(2+) serves as cofactor.

It localises to the cytoplasm. It carries out the reaction Endonucleolytic cleavage to 5'-phosphomonoester.. Its function is as follows. Endonuclease that specifically degrades the RNA of RNA-DNA hybrids. This chain is Ribonuclease HII, found in Wolbachia sp. subsp. Brugia malayi (strain TRS).